A 680-amino-acid chain; its full sequence is DNA ligase (680 aa).

32–36 is an NAD(+) binding site; that stretch reads DTVYD. Residues 47–66 form a disordered region; the sequence is QNDPGLQRPDSPTQRVGGAP. Residues 81-82 and Glu-115 contribute to the NAD(+) site; that span reads SL. Lys-117 acts as the N6-AMP-lysine intermediate in catalysis. NAD(+) is bound by residues Arg-138, Glu-175, Lys-291, and Lys-315. Zn(2+)-binding residues include Cys-409, Cys-412, Cys-427, and Cys-432. Residues 602 to 680 enclose the BRCT domain; it reads DADGVLQGKT…EADLTALLQP (79 aa).

Belongs to the NAD-dependent DNA ligase family. LigA subfamily. Requires Mg(2+) as cofactor. Mn(2+) serves as cofactor.

The catalysed reaction is NAD(+) + (deoxyribonucleotide)n-3'-hydroxyl + 5'-phospho-(deoxyribonucleotide)m = (deoxyribonucleotide)n+m + AMP + beta-nicotinamide D-nucleotide.. DNA ligase that catalyzes the formation of phosphodiester linkages between 5'-phosphoryl and 3'-hydroxyl groups in double-stranded DNA using NAD as a coenzyme and as the energy source for the reaction. It is essential for DNA replication and repair of damaged DNA. The sequence is that of DNA ligase from Synechococcus sp. (strain CC9605).